We begin with the raw amino-acid sequence, 256 residues long: Pimeloyl-[acyl-carrier protein] methyl ester esterase (256 aa).

In terms of domain architecture, AB hydrolase-1 spans 15–242 (HLVLLHGWGL…AAHAPFISHP (228 aa)). Residues tryptophan 22, 82-83 (SL), and 143-147 (FLALQ) contribute to the substrate site. The active-site Nucleophile is the serine 82. Catalysis depends on residues aspartate 207 and histidine 235. Residue histidine 235 coordinates substrate.

It belongs to the AB hydrolase superfamily. Carboxylesterase BioH family. As to quaternary structure, monomer.

The protein localises to the cytoplasm. The enzyme catalyses 6-carboxyhexanoyl-[ACP] methyl ester + H2O = 6-carboxyhexanoyl-[ACP] + methanol + H(+). Its pathway is cofactor biosynthesis; biotin biosynthesis. Functionally, the physiological role of BioH is to remove the methyl group introduced by BioC when the pimeloyl moiety is complete. It allows to synthesize pimeloyl-ACP via the fatty acid synthetic pathway through the hydrolysis of the ester bonds of pimeloyl-ACP esters. The sequence is that of Pimeloyl-[acyl-carrier protein] methyl ester esterase from Citrobacter koseri (strain ATCC BAA-895 / CDC 4225-83 / SGSC4696).